The chain runs to 620 residues: Chaperone protein DnaK (620 aa).

The tract at residues 579–620 (KAQKEASAGAEASEDASGPSSTGSASDDDVVDADYEVVDEDK) is disordered. The segment covering 583-603 (EASAGAEASEDASGPSSTGSA) has biased composition (low complexity). Residues 604-620 (SDDDVVDADYEVVDEDK) are compositionally biased toward acidic residues.

This sequence belongs to the heat shock protein 70 family.

Functionally, acts as a chaperone. In Methanococcoides burtonii (strain DSM 6242 / NBRC 107633 / OCM 468 / ACE-M), this protein is Chaperone protein DnaK.